A 1112-amino-acid polypeptide reads, in one-letter code: Carbamoyl phosphate synthase large chain (1112 aa).

Positions 1-407 are carboxyphosphate synthetic domain; sequence MPRRTDLRHV…ALGKVMRSLE (407 aa). ATP contacts are provided by Arg-134, Arg-174, Gly-180, Gly-181, Glu-213, Ile-215, Glu-220, Gly-246, Val-247, His-248, Gln-290, and Glu-304. An ATP-grasp 1 domain is found at 138–333; sequence KDIVTKVGGE…IAKIAAKLAI (196 aa). 3 residues coordinate Mg(2+): Gln-290, Glu-304, and Asn-306. Residues Gln-290, Glu-304, and Asn-306 each coordinate Mn(2+). The interval 408–559 is oligomerization domain; sequence TGRAGFWTAP…ELDPAAESEV (152 aa). The segment at 560-965 is carbamoyl phosphate synthetic domain; the sequence is APQAERPKVL…AFAKSQTAAY (406 aa). An ATP-grasp 2 domain is found at 693–884; that stretch reads GEVLRTAGLP…LAKACARIML (192 aa). ATP is bound by residues Arg-729, Arg-768, Leu-770, Glu-775, Gly-800, Ile-801, His-802, Ser-803, Gln-843, and Glu-855. Mg(2+) is bound by residues Gln-843, Glu-855, and Asn-857. Mn(2+)-binding residues include Gln-843, Glu-855, and Asn-857. The MGS-like domain maps to 966-1112; sequence GSLPSEGTVF…LQELHSELGN (147 aa). The interval 966–1112 is allosteric domain; sequence GSLPSEGTVF…LQELHSELGN (147 aa).

This sequence belongs to the CarB family. Composed of two chains; the small (or glutamine) chain promotes the hydrolysis of glutamine to ammonia, which is used by the large (or ammonia) chain to synthesize carbamoyl phosphate. Tetramer of heterodimers (alpha,beta)4. It depends on Mg(2+) as a cofactor. The cofactor is Mn(2+).

It carries out the reaction hydrogencarbonate + L-glutamine + 2 ATP + H2O = carbamoyl phosphate + L-glutamate + 2 ADP + phosphate + 2 H(+). It catalyses the reaction hydrogencarbonate + NH4(+) + 2 ATP = carbamoyl phosphate + 2 ADP + phosphate + 2 H(+). It functions in the pathway amino-acid biosynthesis; L-arginine biosynthesis; carbamoyl phosphate from bicarbonate: step 1/1. The protein operates within pyrimidine metabolism; UMP biosynthesis via de novo pathway; (S)-dihydroorotate from bicarbonate: step 1/3. Its function is as follows. Large subunit of the glutamine-dependent carbamoyl phosphate synthetase (CPSase). CPSase catalyzes the formation of carbamoyl phosphate from the ammonia moiety of glutamine, carbonate, and phosphate donated by ATP, constituting the first step of 2 biosynthetic pathways, one leading to arginine and/or urea and the other to pyrimidine nucleotides. The large subunit (synthetase) binds the substrates ammonia (free or transferred from glutamine from the small subunit), hydrogencarbonate and ATP and carries out an ATP-coupled ligase reaction, activating hydrogencarbonate by forming carboxy phosphate which reacts with ammonia to form carbamoyl phosphate. In Mycobacterium sp. (strain JLS), this protein is Carbamoyl phosphate synthase large chain.